The chain runs to 387 residues: MELNTLKSTFINNFGKEPTSLFFSPGRINLIGEHIDYNGGFVFPCPITLGTFAAASLREDRICRAYSLNFESLGVIEFSLDDLSYKKEDNWTNYLKGVLKVLIEKGYKIDKGIDLVINGNLPNGAGLSSSASLEMLIVKILDTFFSLNISKVDAALIGKEVENTYIGVNSGIMDQFAISLGEKDKAILLDCNSLYYEYVPLNLGDNSIIIMNTNKRRELADSKYNERRKECDDSLDTLKKYTNISSLCELTSLEFETYKDKIEDSNKLRRCVHAISENERVKDAVKALKENNLELFGQLMNQSHISLRDDYEVTGKELDTLAENAWKQPGVLGARMTGAGFGGCAIAIVNNAHVDEFIKNVGQAYKDAIGYEASFYVASIGNGPTEL.

Residue 33–36 participates in substrate binding; the sequence is EHID. Residues serine 67 and 124–130 each bind ATP; that span reads GAGLSSS. Serine 130 and glutamate 162 together coordinate Mg(2+). Catalysis depends on aspartate 174, which acts as the Proton acceptor. Tyrosine 224 contacts substrate.

The protein belongs to the GHMP kinase family. GalK subfamily.

The protein localises to the cytoplasm. The catalysed reaction is alpha-D-galactose + ATP = alpha-D-galactose 1-phosphate + ADP + H(+). Its pathway is carbohydrate metabolism; galactose metabolism. Catalyzes the transfer of the gamma-phosphate of ATP to D-galactose to form alpha-D-galactose-1-phosphate (Gal-1-P). The polypeptide is Galactokinase (Clostridium perfringens (strain ATCC 13124 / DSM 756 / JCM 1290 / NCIMB 6125 / NCTC 8237 / Type A)).